The primary structure comprises 435 residues: Transmembrane protease serine 4 (435 aa).

Over 1-30 the chain is Cytoplasmic; it reads MESDSGQPLNNRDIVPFRKPRRPQETFKKV. A helical; Signal-anchor for type II membrane protein membrane pass occupies residues 31 to 51; it reads GIPIIAVLLSLIALVIVALLI. Over 52-435 the chain is Extracellular; the sequence is KVILDKYYFI…WIYNVRKSEM (384 aa). The region spanning 59-101 is the LDL-receptor class A domain; it reads YFICGSPLTFIQRGQLCDGHLDCASGEDEEHCVKDFPEKPGVA. Cystine bridges form between cysteine 62–cysteine 81, cysteine 75–cysteine 90, cysteine 125–cysteine 181, cysteine 138–cysteine 191, cysteine 194–cysteine 308, cysteine 228–cysteine 244, cysteine 354–cysteine 370, and cysteine 381–cysteine 408. The SRCR domain maps to 102 to 202; it reads VRLSKDRSTL…DCGKSLKTPR (101 aa). N-linked (GlcNAc...) asparagine glycosylation is found at asparagine 128 and asparagine 176. The Peptidase S1 domain maps to 203–432; it reads VVGGVEAPVD…YLNWIYNVRK (230 aa). Residues histidine 243 and aspartate 288 each act as charge relay system in the active site. Serine 385 acts as the Charge relay system in catalysis.

The protein belongs to the peptidase S1 family. Post-translationally, proteolytically processed; probably by an autocatalytic mechanism.

It is found in the cell membrane. It localises to the secreted. Functionally, plasma membrane-anchored serine protease that directly induces processing of pro-uPA/PLAU into the active form through proteolytic activity. Seems to be capable of activating ENaC. In Mus musculus (Mouse), this protein is Transmembrane protease serine 4.